The following is a 73-amino-acid chain: Conotoxin ArMKLT2-022 (73 aa).

The first 22 residues, 1–22, serve as a signal peptide directing secretion; sequence MKLTCVLIIAVLFLTACQLTTG. A propeptide spanning residues 23–40 is cleaved from the precursor; the sequence is EQKDHAQRSADRNSKLTR. Glutamine 41 bears the Pyrrolidone carboxylic acid mark. Cystine bridges form between cysteine 42-cysteine 56, cysteine 49-cysteine 60, and cysteine 55-cysteine 67.

It belongs to the conotoxin O1 superfamily. Expressed by the venom duct.

It is found in the secreted. The protein is Conotoxin ArMKLT2-022 of Conus arenatus (Sand-dusted cone).